A 487-amino-acid polypeptide reads, in one-letter code: 3-octaprenyl-4-hydroxybenzoate carboxy-lyase (487 aa).

Asn-172 contributes to the Mn(2+) binding site. Residues 175-177 (IYR), 189-191 (RWL), and 194-195 (RG) contribute to the prenylated FMN site. Mn(2+) is bound at residue Glu-238. Asp-287 serves as the catalytic Proton donor.

The protein belongs to the UbiD family. In terms of assembly, homohexamer. Requires prenylated FMN as cofactor. It depends on Mn(2+) as a cofactor.

Its subcellular location is the cell membrane. It catalyses the reaction a 4-hydroxy-3-(all-trans-polyprenyl)benzoate + H(+) = a 2-(all-trans-polyprenyl)phenol + CO2. It functions in the pathway cofactor biosynthesis; ubiquinone biosynthesis. In terms of biological role, catalyzes the decarboxylation of 3-octaprenyl-4-hydroxy benzoate to 2-octaprenylphenol, an intermediate step in ubiquinone biosynthesis. This Blochmanniella pennsylvanica (strain BPEN) protein is 3-octaprenyl-4-hydroxybenzoate carboxy-lyase.